The following is a 376-amino-acid chain: Branched-chain-amino-acid aminotransferase, cytosolic (376 aa).

Lys202 is subject to N6-(pyridoxal phosphate)lysine.

It belongs to the class-IV pyridoxal-phosphate-dependent aminotransferase family. It depends on pyridoxal 5'-phosphate as a cofactor.

It localises to the cytoplasm. It catalyses the reaction L-leucine + 2-oxoglutarate = 4-methyl-2-oxopentanoate + L-glutamate. The enzyme catalyses L-isoleucine + 2-oxoglutarate = (S)-3-methyl-2-oxopentanoate + L-glutamate. The catalysed reaction is L-valine + 2-oxoglutarate = 3-methyl-2-oxobutanoate + L-glutamate. It carries out the reaction a 2-oxocarboxylate + L-methionine = 4-methylsulfanyl-2-oxobutanoate + an L-alpha-amino acid. Its pathway is amino-acid biosynthesis; L-isoleucine biosynthesis; L-isoleucine from 2-oxobutanoate: step 4/4. It participates in amino-acid biosynthesis; L-leucine biosynthesis; L-leucine from 3-methyl-2-oxobutanoate: step 4/4. The protein operates within amino-acid biosynthesis; L-valine biosynthesis; L-valine from pyruvate: step 4/4. It functions in the pathway amino-acid biosynthesis; L-methionine biosynthesis via salvage pathway; L-methionine from S-methyl-5-thio-alpha-D-ribose 1-phosphate: step 6/6. In terms of biological role, cytoplasmic isozyme of branched-chain-amino-acid aminotransferase, which catalyzes the first reaction in the catabolism of the essential branched chain amino acids (BCAAs) leucine, isoleucine, and valine. Catalyzes the formation of methionine from 2-keto-4-methylthiobutyrate (KMTB) in the methionine salvage pathway primarily using BCAAs (leucine, isoleucine, and valine) as well as lysine and proline as the amino donors. Involved in cell cycle regulation. The polypeptide is Branched-chain-amino-acid aminotransferase, cytosolic (Saccharomyces cerevisiae (strain ATCC 204508 / S288c) (Baker's yeast)).